A 1077-amino-acid polypeptide reads, in one-letter code: Carbamoyl phosphate synthase large chain (1077 aa).

Positions 1-403 (MPKRTDIQSI…SLHKALRGLE (403 aa)) are carboxyphosphate synthetic domain. Residues Arg-129, Arg-169, Gly-175, Gly-176, Glu-208, Leu-210, Glu-215, Gly-241, Ile-242, His-243, Gln-285, and Glu-299 each contribute to the ATP site. Residues 133–328 (DKAMKSIGLE…IAKIAAKLAV (196 aa)) form the ATP-grasp 1 domain. Positions 285, 299, and 301 each coordinate Mg(2+). Positions 285, 299, and 301 each coordinate Mn(2+). An oligomerization domain region spans residues 404–553 (VGATGFDEMV…YSSYDDECEA (150 aa)). Residues 554 to 935 (NPTDKEKIMV…AYAKAELGCG (382 aa)) are carbamoyl phosphate synthetic domain. Residues 678 to 869 (QQAVDRLGLL…LAKIAARVMA (192 aa)) form the ATP-grasp 2 domain. Residues Arg-714, Arg-753, Leu-755, Glu-760, Gly-785, Val-786, His-787, Ser-788, Gln-828, and Glu-840 each coordinate ATP. 3 residues coordinate Mg(2+): Gln-828, Glu-840, and Asn-842. Mn(2+) is bound by residues Gln-828, Glu-840, and Asn-842. Residues 936-1077 (NVYPEGGRAL…HAQVQASLKA (142 aa)) enclose the MGS-like domain. The allosteric domain stretch occupies residues 936 to 1077 (NVYPEGGRAL…HAQVQASLKA (142 aa)).

It belongs to the CarB family. Composed of two chains; the small (or glutamine) chain promotes the hydrolysis of glutamine to ammonia, which is used by the large (or ammonia) chain to synthesize carbamoyl phosphate. Tetramer of heterodimers (alpha,beta)4. The cofactor is Mg(2+). Requires Mn(2+) as cofactor.

It carries out the reaction hydrogencarbonate + L-glutamine + 2 ATP + H2O = carbamoyl phosphate + L-glutamate + 2 ADP + phosphate + 2 H(+). The enzyme catalyses hydrogencarbonate + NH4(+) + 2 ATP = carbamoyl phosphate + 2 ADP + phosphate + 2 H(+). It participates in amino-acid biosynthesis; L-arginine biosynthesis; carbamoyl phosphate from bicarbonate: step 1/1. Its pathway is pyrimidine metabolism; UMP biosynthesis via de novo pathway; (S)-dihydroorotate from bicarbonate: step 1/3. Functionally, large subunit of the glutamine-dependent carbamoyl phosphate synthetase (CPSase). CPSase catalyzes the formation of carbamoyl phosphate from the ammonia moiety of glutamine, carbonate, and phosphate donated by ATP, constituting the first step of 2 biosynthetic pathways, one leading to arginine and/or urea and the other to pyrimidine nucleotides. The large subunit (synthetase) binds the substrates ammonia (free or transferred from glutamine from the small subunit), hydrogencarbonate and ATP and carries out an ATP-coupled ligase reaction, activating hydrogencarbonate by forming carboxy phosphate which reacts with ammonia to form carbamoyl phosphate. The chain is Carbamoyl phosphate synthase large chain from Vibrio vulnificus (strain CMCP6).